The primary structure comprises 333 residues: Glycerol-3-phosphate dehydrogenase [NAD(P)+] 2 (333 aa).

Residues Ser12, Trp13, Arg32, and Lys106 each contribute to the NADPH site. The sn-glycerol 3-phosphate site is built by Lys106 and Gly134. An NADPH-binding site is contributed by Ala138. Positions 189, 242, 252, 253, and 254 each coordinate sn-glycerol 3-phosphate. Lys189 serves as the catalytic Proton acceptor. Arg253 is an NADPH binding site. Residues Val277 and Glu279 each coordinate NADPH.

The protein belongs to the NAD-dependent glycerol-3-phosphate dehydrogenase family.

It localises to the cytoplasm. The enzyme catalyses sn-glycerol 3-phosphate + NAD(+) = dihydroxyacetone phosphate + NADH + H(+). It catalyses the reaction sn-glycerol 3-phosphate + NADP(+) = dihydroxyacetone phosphate + NADPH + H(+). It functions in the pathway membrane lipid metabolism; glycerophospholipid metabolism. In terms of biological role, catalyzes the reduction of the glycolytic intermediate dihydroxyacetone phosphate (DHAP) to sn-glycerol 3-phosphate (G3P), the key precursor for phospholipid synthesis. This is Glycerol-3-phosphate dehydrogenase [NAD(P)+] 2 from Sphingopyxis alaskensis (strain DSM 13593 / LMG 18877 / RB2256) (Sphingomonas alaskensis).